Here is a 296-residue protein sequence, read N- to C-terminus: Phosphoribosylaminoimidazole-succinocarboxamide synthase (296 aa).

It belongs to the SAICAR synthetase family.

It catalyses the reaction 5-amino-1-(5-phospho-D-ribosyl)imidazole-4-carboxylate + L-aspartate + ATP = (2S)-2-[5-amino-1-(5-phospho-beta-D-ribosyl)imidazole-4-carboxamido]succinate + ADP + phosphate + 2 H(+). Its pathway is purine metabolism; IMP biosynthesis via de novo pathway; 5-amino-1-(5-phospho-D-ribosyl)imidazole-4-carboxamide from 5-amino-1-(5-phospho-D-ribosyl)imidazole-4-carboxylate: step 1/2. The sequence is that of Phosphoribosylaminoimidazole-succinocarboxamide synthase from Geobacter sulfurreducens (strain ATCC 51573 / DSM 12127 / PCA).